A 37-amino-acid polypeptide reads, in one-letter code: Cytochrome b6-f complex subunit 5 (37 aa).

A helical membrane pass occupies residues Leu-5–Ala-25.

This sequence belongs to the PetG family. The 4 large subunits of the cytochrome b6-f complex are cytochrome b6, subunit IV (17 kDa polypeptide, PetD), cytochrome f and the Rieske protein, while the 4 small subunits are PetG, PetL, PetM and PetN. The complex functions as a dimer.

It is found in the cellular thylakoid membrane. Its function is as follows. Component of the cytochrome b6-f complex, which mediates electron transfer between photosystem II (PSII) and photosystem I (PSI), cyclic electron flow around PSI, and state transitions. PetG is required for either the stability or assembly of the cytochrome b6-f complex. The chain is Cytochrome b6-f complex subunit 5 from Thermosynechococcus vestitus (strain NIES-2133 / IAM M-273 / BP-1).